The chain runs to 388 residues: Succinate--CoA ligase [ADP-forming] subunit beta (388 aa).

Residues 9–244 (KSLFAEYGLP…PSQDDAREAH (236 aa)) form the ATP-grasp domain. ATP-binding positions include K46, 53 to 55 (GRG), E99, T102, and E107. Mg(2+)-binding residues include N199 and D213. Substrate-binding positions include N264 and 321-323 (GIV).

It belongs to the succinate/malate CoA ligase beta subunit family. Heterotetramer of two alpha and two beta subunits. Mg(2+) is required as a cofactor.

The enzyme catalyses succinate + ATP + CoA = succinyl-CoA + ADP + phosphate. It carries out the reaction GTP + succinate + CoA = succinyl-CoA + GDP + phosphate. The protein operates within carbohydrate metabolism; tricarboxylic acid cycle; succinate from succinyl-CoA (ligase route): step 1/1. Succinyl-CoA synthetase functions in the citric acid cycle (TCA), coupling the hydrolysis of succinyl-CoA to the synthesis of either ATP or GTP and thus represents the only step of substrate-level phosphorylation in the TCA. The beta subunit provides nucleotide specificity of the enzyme and binds the substrate succinate, while the binding sites for coenzyme A and phosphate are found in the alpha subunit. This is Succinate--CoA ligase [ADP-forming] subunit beta from Shewanella sp. (strain MR-4).